We begin with the raw amino-acid sequence, 460 residues long: A-type ATP synthase subunit B (460 aa).

The protein belongs to the ATPase alpha/beta chains family. As to quaternary structure, has multiple subunits with at least A(3), B(3), C, D, E, F, H, I and proteolipid K(x).

The protein resides in the cell membrane. Component of the A-type ATP synthase that produces ATP from ADP in the presence of a proton gradient across the membrane. The B chain is a regulatory subunit. The polypeptide is A-type ATP synthase subunit B (Thermoplasma volcanium (strain ATCC 51530 / DSM 4299 / JCM 9571 / NBRC 15438 / GSS1)).